Consider the following 35-residue polypeptide: GFGSLFKFLAKKVAKTVAKQAAKQGAKYIANKQME.

At glutamate 35 the chain carries Glutamic acid 1-amide.

This sequence belongs to the cationic peptide 04 (cupiennin) family. 01 subfamily. As to expression, expressed by the venom gland.

The protein localises to the secreted. Functionally, has antimicrobial activity against E.coli, E.faecalis, P.aeruginosa, and S.aureus. Has insecticidal and hemolytic activities. Probably acts by disturbing membrane function with its amphipathic structure. The polypeptide is Cupiennin-1b (Cupiennius salei (American wandering spider)).